We begin with the raw amino-acid sequence, 1377 residues long: DNA-directed RNA polymerase subunit beta' (1377 aa).

Zn(2+) contacts are provided by Cys70, Cys72, Cys85, and Cys88. Residues Asp460, Asp462, and Asp464 each contribute to the Mg(2+) site. Positions 808, 882, 889, and 892 each coordinate Zn(2+).

It belongs to the RNA polymerase beta' chain family. In terms of assembly, the RNAP catalytic core consists of 2 alpha, 1 beta, 1 beta' and 1 omega subunit. When a sigma factor is associated with the core the holoenzyme is formed, which can initiate transcription. Requires Mg(2+) as cofactor. Zn(2+) serves as cofactor.

It catalyses the reaction RNA(n) + a ribonucleoside 5'-triphosphate = RNA(n+1) + diphosphate. In terms of biological role, DNA-dependent RNA polymerase catalyzes the transcription of DNA into RNA using the four ribonucleoside triphosphates as substrates. In Geotalea uraniireducens (strain Rf4) (Geobacter uraniireducens), this protein is DNA-directed RNA polymerase subunit beta'.